Reading from the N-terminus, the 232-residue chain is Ribonuclease HII (232 aa).

The RNase H type-2 domain maps to 26-218 (RILCGVDEAG…VRRALEGMSA (193 aa)). A divalent metal cation contacts are provided by Asp-32, Glu-33, and Asp-127.

It belongs to the RNase HII family. Mn(2+) serves as cofactor. It depends on Mg(2+) as a cofactor.

The protein resides in the cytoplasm. It carries out the reaction Endonucleolytic cleavage to 5'-phosphomonoester.. Functionally, endonuclease that specifically degrades the RNA of RNA-DNA hybrids. This is Ribonuclease HII from Ralstonia pickettii (strain 12J).